The following is a 164-amino-acid chain: Hoefavidin (164 aa).

Positions 1 to 22 (MNKVLAIVLTITVAGFAQTAFA) are cleaved as a signal peptide. An Avidin-like domain is found at 32–155 (KLLAGASNWV…GQDDFMQSVA (124 aa)). Biotin-binding residues include N42, S46, Y68, N70, and G76. C77 and C108 are disulfide-bonded. Residues S110, T112, and D148 each coordinate biotin.

This sequence belongs to the avidin/streptavidin family. In terms of assembly, exhibits a dynamic oligomeric assembly: the apo form exits as homooctamers, which dissociate into homodimers upon biotin binding. The X-ray structure of the intact hoefavidin reveals unique crystal packing generated by an octameric cylindrical structure wherein the C-terminal segments of each monomer are introduced into the entrance of the biotin-binding site of an adjacent non-canonical monomer.

The protein localises to the secreted. The exact role played by hoefavidin in the host organism is still obscure. Forms a strong non-covalent complex with biotin and 2-iminobiotin. The protein is Hoefavidin of Hoeflea phototrophica (strain DSM 17068 / NCIMB 14078 / DFL-43).